The following is a 1848-amino-acid chain: Cellulose-binding protein A (1848 aa).

An N-terminal signal peptide occupies residues 1-28 (MQKKKSLNLLLALMMVFALVLPSIPALA). A CBM3 domain is found at 29–190 (ATSSMSVEFY…GAKVLGTAPG (162 aa)). 9 consecutive Cohesin domains span residues 291-428 (VTAT…TVTI), 435-570 (MQIS…SVTI), 668-801 (VTAT…SVTI), 810-943 (VTAT…SVTI), 952-1085 (VTAT…SVTI), 1094-1227 (VTAT…SVTI), 1236-1369 (VTAT…SVTI), 1377-1511 (VKAT…RLTI), and 1709-1847 (FAVK…SVKV).

In terms of processing, the N-terminus is blocked. Post-translationally, glycosylated.

The protein localises to the secreted. Binds to cellulose fibers and coordinates cellulase enzymes. This is Cellulose-binding protein A (cbpA) from Clostridium cellulovorans.